We begin with the raw amino-acid sequence, 341 residues long: Trace amine-associated receptor 13c (341 aa).

Over 1-34 (MDLSSQEYDPSQFCFPAVNNSCLKGTHHVSTQTV) the chain is Extracellular. An N-linked (GlcNAc...) asparagine glycan is attached at Asn-19. Disulfide bonds link Cys-22–Cys-186 and Cys-105–Cys-186. The helical transmembrane segment at 35–55 (VYLILASAMTVTVLGNSVVII) threads the bilayer. At 56–68 (SIAHFKQLQTPTN) the chain is on the cytoplasmic side. Residues 69 to 89 (ILVMSLALADLLLGLVVMPFS) traverse the membrane as a helical segment. Residues 90–105 (MIRSVDGCWYYGETFC) lie on the Extracellular side of the membrane. The chain crosses the membrane as a helical span at residues 106 to 126 (LLHTGFDLFLTSVSIFHLIFI). Residues 127–147 (AVDRHQAVCFPLQYPTRITIP) lie on the Cytoplasmic side of the membrane. The helical transmembrane segment at 148 to 168 (VAWVMVMISWSMAAFYSYGVV) threads the bilayer. The Extracellular segment spans residues 169–195 (YSKANLEGLEEYIASVYCMGGCTLYFN). The chain crosses the membrane as a helical span at residues 196 to 219 (ALWSVLDTLLTFFLPCSVMVGLYA). Residues 220 to 257 (RIFVVAKKHIKSITEANQNENENVFKNPRRSERKAAKT) lie on the Cytoplasmic side of the membrane. Residues 258 to 278 (LGIVVGAFILCWLPFFINSLV) traverse the membrane as a helical segment. Residues 279–292 (DPYINFSTPYALFD) lie on the Extracellular side of the membrane. Asn-283 is a glycosylation site (N-linked (GlcNAc...) asparagine). A helical transmembrane segment spans residues 293–313 (AFGWLGYTNSTLNPIIYGLFY). The Cytoplasmic segment spans residues 314–341 (PWFRKTLSLIVTLRIFEPNSSDINLFTV).

This sequence belongs to the G-protein coupled receptor 1 family. As to expression, expressed in olfactory epithelium (at protein level). Detected in a sparse population of olfactory sensory neurons.

Its subcellular location is the cell membrane. In terms of biological role, olfactory receptor for medium length odd-chained diamines including cadaverine which is generated by bacterial decarboxylation of the basic amino acid lysine and contributes to the odor of decomposing tissue. Mediates pronounced innate aversion behavior to cadaverine. The sequence is that of Trace amine-associated receptor 13c from Danio rerio (Zebrafish).